The following is a 554-amino-acid chain: DM7 family protein GG17593 (554 aa).

This sequence belongs to the DM7 family.

This chain is DM7 family protein GG17593, found in Drosophila erecta (Fruit fly).